Consider the following 222-residue polypeptide: Putative N-acetylmannosamine-6-phosphate 2-epimerase (222 aa).

This sequence belongs to the NanE family.

The catalysed reaction is an N-acyl-D-glucosamine 6-phosphate = an N-acyl-D-mannosamine 6-phosphate. It functions in the pathway amino-sugar metabolism; N-acetylneuraminate degradation; D-fructose 6-phosphate from N-acetylneuraminate: step 3/5. Functionally, converts N-acetylmannosamine-6-phosphate (ManNAc-6-P) to N-acetylglucosamine-6-phosphate (GlcNAc-6-P). The chain is Putative N-acetylmannosamine-6-phosphate 2-epimerase from Staphylococcus aureus (strain USA300).